A 356-amino-acid chain; its full sequence is Iron-regulated protein A (356 aa).

The N-terminal stretch at 1–44 (MIVTGSQVRQGLNTWFVLPLRRTAIGLGCAGVATLFSACGQTQA) is a signal peptide. Hydrophilic regions lie at residues 75-145 (QALQ…EQRE) and 240-310 (GGPL…ATAR).

The iron-regulated protein A is one unit of the protein complex CPVI-4, which is synthesized under iron deficient conditions.

The protein resides in the cell inner membrane. Functionally, irpA occurs under iron-deficient growth conditions in cyanobacterium Synechococcus and disappears in cells recovering from iron starvation. It seems to be involved in iron acquisition, uptake or storage. The polypeptide is Iron-regulated protein A (irpA) (Synechococcus elongatus (strain ATCC 33912 / PCC 7942 / FACHB-805) (Anacystis nidulans R2)).